The sequence spans 448 residues: O-Mevalon transferase yanI (448 aa).

An N-linked (GlcNAc...) asparagine glycan is attached at asparagine 2. The next 8 membrane-spanning stretches (helical) occupy residues 21 to 41 (VLLS…LLAV), 54 to 74 (YGLL…PPPP), 79 to 96 (AVLY…ARYF), 165 to 185 (FVTA…LVEV), 217 to 237 (LIVL…VLPL), 316 to 336 (MLML…SYHV), 350 to 370 (VKYF…CWLL), and 390 to 410 (IVTA…PVAL).

Belongs to the wax synthase family.

It localises to the membrane. Its pathway is secondary metabolite biosynthesis; terpenoid biosynthesis. O-Mevalon transferase yanI; part of the gene cluster that mediates the biosynthesis of yanuthone D, a fungal isoprenoid epoxycyclohexenone that acts as an antibiotic against fungi and bacteria. The first step of the pathway is the synthesis of 6-methylsalicylic acid (6-MSA) by the polyketide synthase yanA. 6-MSA is then converted to m-cresol by the decarboxylase yanB. The cytochrome P450 monooxygenase yanC then catalyzes the oxidation of m-cresol to toluquinol. Epoxidation of toluquinol is then performed by the short chain dehydrogenase yanD, with the help of yanE, and a further prenylation by yanG leads to 7-deacetoxyyanuthone A. The next step is the hydroxylation of C-22 of 7-deacetoxyyanuthone A by the cytochrome P450 monooxygenase yanH to yield 22-deacetylyanuthone A. O-Mevalon transferase yanI then attaches mevalon to the hydroxyl group of 22-deacetylyanuthone A to produce yanuthone E. Finally, the FAD-dependent monooxygenase yanF oxidizes the hydroxyl group at C15 of yanuthone E to form yanuthone D. Furthermore, several branching points in the pathway lead to the production of yanuthones F and G from 7-deacetoxyyanuthone A; yanuthones H and I from 22-deacetylyanuthone A; and yanuthone J from yanuthone E. The chain is O-Mevalon transferase yanI from Aspergillus niger (strain ATCC 1015 / CBS 113.46 / FGSC A1144 / LSHB Ac4 / NCTC 3858a / NRRL 328 / USDA 3528.7).